The primary structure comprises 604 residues: UvrABC system protein C (604 aa).

The region spanning 10–89 (ELPGVYLMKD…VKKNRPHYNI (80 aa)) is the GIY-YIG domain. The UVR domain occupies 199-234 (SGTIKELQEKMNIHAIAQEYESAAVIRDQIDALKSL).

The protein belongs to the UvrC family. As to quaternary structure, interacts with UvrB in an incision complex.

The protein localises to the cytoplasm. Functionally, the UvrABC repair system catalyzes the recognition and processing of DNA lesions. UvrC both incises the 5' and 3' sides of the lesion. The N-terminal half is responsible for the 3' incision and the C-terminal half is responsible for the 5' incision. This chain is UvrABC system protein C, found in Methanococcoides burtonii (strain DSM 6242 / NBRC 107633 / OCM 468 / ACE-M).